Reading from the N-terminus, the 412-residue chain is Peptidyl-prolyl cis-trans isomerase FKBP8 (412 aa).

Residues 1-68 are disordered; sequence MASCAEPSEP…GQPPAEEAEQ (68 aa). Residues 22–50 are compositionally biased toward acidic residues; sequence EDFEVLDGVEDAEGEEEEEEEEEEEDDLS. Residues 120-204 form the PPIase FKBP-type domain; the sequence is GQVVTVHLQT…CLEVTLKTAV (85 aa). The Ca(2+) site is built by Asp149 and Asp151. Residues 221-254 form a TPR 1 repeat; that stretch reads ANRKRECGNAHYQRADFVLAANSYDLAIKAITSS. Glycyl lysine isopeptide (Lys-Gly) (interchain with G-Cter in ubiquitin) cross-links involve residues Lys249, Lys271, Lys273, and Lys284. TPR repeat units follow at residues 272 to 305 and 306 to 339; these read VKCL…QPDN and IKAL…EPSN. Ser296 carries the phosphoserine modification. Residues Lys307, Lys314, Lys334, Lys340, Lys348, Lys351, and Lys352 each participate in a glycyl lysine isopeptide (Lys-Gly) (interchain with G-Cter in ubiquitin) cross-link. A helical transmembrane segment spans residues 390–410; sequence WLFGATAVALGGVALSVVIAA.

As to quaternary structure, homomultimers or heteromultimers (Potential). Forms heterodimer with calmodulin. When activated by calmodulin and calcium, interacts with the BH4 domain of BCL2 and weakly with BCL2L1/BCLX isoform Bcl-X(L). Does not bind and inhibit calcineurin. Interacts with ZFYVE27; may negatively regulate ZFYVE27 phosphorylation. (Microbial infection) Interacts with hepatitis C/HCV protein NS5A. Requires Ca(2+) as cofactor. Ubiquitinated by PRKN during mitophagy, leading to its degradation and enhancement of mitophagy. Deubiquitinated by USP30. Widely expressed. Highest levels seen in the brain. Highly abundant in the retina.

It is found in the mitochondrion. Its subcellular location is the mitochondrion membrane. It carries out the reaction [protein]-peptidylproline (omega=180) = [protein]-peptidylproline (omega=0). Functionally, constitutively inactive PPiase, which becomes active when bound to calmodulin and calcium. Seems to act as a chaperone for BCL2, targets it to the mitochondria and modulates its phosphorylation state. The BCL2/FKBP8/calmodulin/calcium complex probably interferes with the binding of BCL2 to its targets. The active form of FKBP8 may therefore play a role in the regulation of apoptosis. Involved in the inhibition of viral infection by influenza A viruses (IAV). This chain is Peptidyl-prolyl cis-trans isomerase FKBP8 (FKBP8), found in Homo sapiens (Human).